Consider the following 230-residue polypeptide: Cytochrome b6-f complex iron-sulfur subunit, chloroplastic (230 aa).

The N-terminal 50 residues, 1–50 (MSSTTLSPTTPSQLCSGKSGISCPSIALLVKPTRTQMTGRGNKGMKITCQ), are a transit peptide targeting the chloroplast. The chain crosses the membrane as a helical span at residues 72 to 92 (LLGALSLPTAGMLVPYGSFLV). The Rieske domain maps to 115–213 (ATEWLKTHAP…VGVEDGKVVF (99 aa)). The [2Fe-2S] cluster site is built by Cys157, His159, Cys175, and His178. An intrachain disulfide couples Cys162 to Cys177.

The protein belongs to the Rieske iron-sulfur protein family. The 4 large subunits of the cytochrome b6-f complex are cytochrome b6, subunit IV (17 kDa polypeptide, petD), cytochrome f and the Rieske protein, while the 4 small subunits are petG, petL, petM and petN. The complex functions as a dimer. [2Fe-2S] cluster serves as cofactor.

It is found in the plastid. It localises to the chloroplast thylakoid membrane. It carries out the reaction 2 oxidized [plastocyanin] + a plastoquinol + 2 H(+)(in) = 2 reduced [plastocyanin] + a plastoquinone + 4 H(+)(out). Component of the cytochrome b6-f complex, which mediates electron transfer between photosystem II (PSII) and photosystem I (PSI), cyclic electron flow around PSI, and state transitions. The polypeptide is Cytochrome b6-f complex iron-sulfur subunit, chloroplastic (petC) (Pisum sativum (Garden pea)).